Here is a 551-residue protein sequence, read N- to C-terminus: Chaperonin GroEL (551 aa).

ATP is bound by residues 30 to 33, K51, 87 to 91, G415, 481 to 483, and D497; these read TLGP, DGTTT, and NAA.

The protein belongs to the chaperonin (HSP60) family. As to quaternary structure, forms a cylinder of 14 subunits composed of two heptameric rings stacked back-to-back. Interacts with the co-chaperonin GroES.

Its subcellular location is the cytoplasm. The enzyme catalyses ATP + H2O + a folded polypeptide = ADP + phosphate + an unfolded polypeptide.. Its function is as follows. Together with its co-chaperonin GroES, plays an essential role in assisting protein folding. The GroEL-GroES system forms a nano-cage that allows encapsulation of the non-native substrate proteins and provides a physical environment optimized to promote and accelerate protein folding. This Magnetococcus marinus (strain ATCC BAA-1437 / JCM 17883 / MC-1) protein is Chaperonin GroEL.